The chain runs to 252 residues: Metalloprotease LoiP (252 aa).

The N-terminal stretch at 1–18 (MKIRALLVAMSVATVLTG) is a signal peptide. C19 is lipidated: N-palmitoyl cysteine. C19 carries S-diacylglycerol cysteine lipidation. C53 and C108 are joined by a disulfide. Zn(2+) is bound at residue H130. Residue E131 is part of the active site. H134 and E189 together coordinate Zn(2+). The tract at residues 224–252 (RQSSMFDDHPASAERAQHIRDRMSADGIK) is disordered.

The protein belongs to the peptidase M48B family. As to quaternary structure, interacts with Era and BepA. Zn(2+) serves as cofactor. Post-translationally, the intramolecular disulfide bond improves the stability and the activity of LoiP. It forms even in the absence of the oxido-reductase DsbA.

It is found in the cell outer membrane. Metalloprotease that cleaves substrates preferentially between Phe-Phe residues. Plays a role in response to some stress conditions. Seems to regulate the expression of speB. The protein is Metalloprotease LoiP (loiP) of Escherichia coli (strain K12).